We begin with the raw amino-acid sequence, 129 residues long: Small ribosomal subunit protein uS8my (129 aa).

The protein belongs to the universal ribosomal protein uS8 family. Component of the mitochondrial ribosome small subunit.

The protein resides in the mitochondrion. This is Small ribosomal subunit protein uS8my (RPS15AE) from Arabidopsis thaliana (Mouse-ear cress).